The primary structure comprises 436 residues: Histidinol dehydrogenase (436 aa).

3 residues coordinate NAD(+): Tyr-136, Gln-198, and Asn-221. Ser-244, Gln-266, and His-269 together coordinate substrate. Residues Gln-266 and His-269 each coordinate Zn(2+). Active-site proton acceptor residues include Glu-334 and His-335. 4 residues coordinate substrate: His-335, Asp-368, Glu-422, and His-427. Asp-368 provides a ligand contact to Zn(2+). His-427 lines the Zn(2+) pocket.

It belongs to the histidinol dehydrogenase family. Zn(2+) serves as cofactor.

It carries out the reaction L-histidinol + 2 NAD(+) + H2O = L-histidine + 2 NADH + 3 H(+). The protein operates within amino-acid biosynthesis; L-histidine biosynthesis; L-histidine from 5-phospho-alpha-D-ribose 1-diphosphate: step 9/9. Catalyzes the sequential NAD-dependent oxidations of L-histidinol to L-histidinaldehyde and then to L-histidine. This is Histidinol dehydrogenase from Dehalococcoides mccartyi (strain ATCC BAA-2266 / KCTC 15142 / 195) (Dehalococcoides ethenogenes (strain 195)).